The following is a 37-amino-acid chain: Large ribosomal subunit protein bL36c (37 aa).

The protein belongs to the bacterial ribosomal protein bL36 family.

The protein resides in the plastid. This Aneura mirabilis (Parasitic liverwort) protein is Large ribosomal subunit protein bL36c.